The following is a 353-amino-acid chain: Paraneoplastic antigen Ma1 homolog (353 aa).

Belongs to the PNMA family.

It is found in the nucleus. The protein resides in the nucleolus. The polypeptide is Paraneoplastic antigen Ma1 homolog (PNMA1) (Bos taurus (Bovine)).